Here is a 396-residue protein sequence, read N- to C-terminus: Elongation factor Tu (396 aa).

One can recognise a tr-type G domain in the interval 10–205; the sequence is KPHVNIGTIG…AVDESIPDPV (196 aa). The tract at residues 19–26 is G1; sequence GHVDHGKT. GTP is bound at residue 19-26; sequence GHVDHGKT. Residue threonine 26 participates in Mg(2+) binding. The tract at residues 62 to 66 is G2; the sequence is GITIN. A G3 region spans residues 83 to 86; the sequence is DAPG. GTP is bound by residues 83 to 87 and 138 to 141; these read DAPGH and NKAD. The tract at residues 138 to 141 is G4; sequence NKAD. The segment at 175–177 is G5; the sequence is SAL.

It belongs to the TRAFAC class translation factor GTPase superfamily. Classic translation factor GTPase family. EF-Tu/EF-1A subfamily. In terms of assembly, monomer.

It localises to the cytoplasm. The catalysed reaction is GTP + H2O = GDP + phosphate + H(+). Functionally, GTP hydrolase that promotes the GTP-dependent binding of aminoacyl-tRNA to the A-site of ribosomes during protein biosynthesis. This is Elongation factor Tu from Mycolicibacterium gilvum (strain PYR-GCK) (Mycobacterium gilvum (strain PYR-GCK)).